The primary structure comprises 497 residues: Galactose/methyl galactoside import ATP-binding protein MglA (497 aa).

ABC transporter domains follow at residues 6-241 (LEIK…VGRS) and 252-497 (VPGE…AKYL). 38–45 (GENGAGKS) contacts ATP.

Belongs to the ABC transporter superfamily. Galactose/methyl galactoside importer (TC 3.A.1.2.3) family. In terms of assembly, the complex is composed of one ATP-binding protein (MglA), two transmembrane proteins (MglC) and a solute-binding protein (MglB).

Its subcellular location is the cell inner membrane. It catalyses the reaction D-galactose(out) + ATP + H2O = D-galactose(in) + ADP + phosphate + H(+). The catalysed reaction is methyl beta-D-galactoside(out) + ATP + H2O = methyl beta-D-galactoside(in) + ADP + phosphate + H(+). Functionally, part of the ABC transporter complex MglABC involved in galactose/methyl galactoside import. Responsible for energy coupling to the transport system. This Treponema denticola (strain ATCC 35405 / DSM 14222 / CIP 103919 / JCM 8153 / KCTC 15104) protein is Galactose/methyl galactoside import ATP-binding protein MglA.